Consider the following 1024-residue polypeptide: MSAYAELHCLSNFSFQRGASSAAELFARAARLGYRALAITDECSLAGIVRAWQAAREYRVKLLVGSEIRLEQGPKLVLLAEDLAGYQQLCRLITRGRRRADKGSYRLLREDLQPALDGVLAIWLAEPGDDDDAAWLGECFPQRLWLGVELHRGADDDARLRGLLALAARAQLPAVACGDVHMHCRGRRALQDCMTAIRNHLPVSEAGAHLFANGERHLRPLAALQGIYPEALLAETLRIAERCRFDLEQLKYQYPRELVPAGHDPASWLRRLTEKGIRRRWPDGASAKVREQIEKELKLISELGYESYFLTVQDIVGFARRQKILCQGRGSAANSAVCFALGITELDPERINLLFERFLSRERNEPPDIDVDFEHERREEVIQYVFNRYGRQRAALTAVVSTYHGAGAVRDVAKALGLPPDQVDALANCCGRWSDRAPSAERLMEAGFDPQSAVLRRVLALTGELVGFPRHLSQHPGGFVISEQPLDTLVPVENASMVERTVIQWDKDDLDAVGLLKVDVLALGMLSALRRSFDLLHELRGGERLSLASIPSEDPATYAMISRADTIGVFQIESRAQMAMLPRLRPEKFYDLVIQVAIVRPGPIQGDMVHPYLRRRNGEEPVAYPSVELEKVFERTLGVPLFQEQVMELAIVAADYSPGEADELRRSMAAWKRHGGLEHHRERLTRGMLANGYEADFAARIFEQIKGFGSYGFPESHAASFALLTYASSWLKRHEPAAFACALINSWPMGFYSPDQLLQDARRHAIQTRPVDVRHSRWDCSLEPIGQEQPAIRLGLRMIRGFREEDARRIEQARQAQSFTDVHDLGRRAGLDTRALELLADAGALRGLAGHRHKARWAIAGVEPQLPLFAEGPRIEEPAISLPLPSRGEELLSDYALLGTTLGPHPLKLLRVQLKARRCRASRELVGMEHGRPVRIAGLVVGRQRPQTASGVTFITLEDEFGMVNVVVWHDLAERQRRPFLESRLLQVEGTLESSSGVRHVIAGRLQDLTPLLTGLDVRSRDFH.

Belongs to the DNA polymerase type-C family. DnaE2 subfamily.

The protein localises to the cytoplasm. The catalysed reaction is DNA(n) + a 2'-deoxyribonucleoside 5'-triphosphate = DNA(n+1) + diphosphate. In terms of biological role, DNA polymerase involved in damage-induced mutagenesis and translesion synthesis (TLS). It is not the major replicative DNA polymerase. The polypeptide is Error-prone DNA polymerase (Pseudomonas paraeruginosa (strain DSM 24068 / PA7) (Pseudomonas aeruginosa (strain PA7))).